We begin with the raw amino-acid sequence, 278 residues long: 4-diphosphocytidyl-2-C-methyl-D-erythritol kinase (278 aa).

The active site involves Lys9. Residue 93 to 103 participates in ATP binding; sequence PLGGGLGGGSS. Asp135 is an active-site residue.

It belongs to the GHMP kinase family. IspE subfamily.

It catalyses the reaction 4-CDP-2-C-methyl-D-erythritol + ATP = 4-CDP-2-C-methyl-D-erythritol 2-phosphate + ADP + H(+). Its pathway is isoprenoid biosynthesis; isopentenyl diphosphate biosynthesis via DXP pathway; isopentenyl diphosphate from 1-deoxy-D-xylulose 5-phosphate: step 3/6. In terms of biological role, catalyzes the phosphorylation of the position 2 hydroxy group of 4-diphosphocytidyl-2C-methyl-D-erythritol. The polypeptide is 4-diphosphocytidyl-2-C-methyl-D-erythritol kinase (Nitrosomonas eutropha (strain DSM 101675 / C91 / Nm57)).